The sequence spans 196 residues: uncharacterized protein (196 aa).

To H.influenzae HI_0431.

This is an uncharacterized protein from Salmonella typhi.